We begin with the raw amino-acid sequence, 140 residues long: 3-hydroxyacyl-[acyl-carrier-protein] dehydratase FabZ (140 aa).

The active site involves His-47.

This sequence belongs to the thioester dehydratase family. FabZ subfamily.

It localises to the cytoplasm. The enzyme catalyses a (3R)-hydroxyacyl-[ACP] = a (2E)-enoyl-[ACP] + H2O. In terms of biological role, involved in unsaturated fatty acids biosynthesis. Catalyzes the dehydration of short chain beta-hydroxyacyl-ACPs and long chain saturated and unsaturated beta-hydroxyacyl-ACPs. This Streptococcus uberis (strain ATCC BAA-854 / 0140J) protein is 3-hydroxyacyl-[acyl-carrier-protein] dehydratase FabZ.